A 99-amino-acid chain; its full sequence is Ferredoxin, heterocyst (99 aa).

Residues 4 to 96 (YQVRLINKKE…NCTIKTHQEP (93 aa)) enclose the 2Fe-2S ferredoxin-type domain. Residues Cys42, Cys47, Cys50, and Cys80 each contribute to the [2Fe-2S] cluster site.

The protein belongs to the 2Fe2S plant-type ferredoxin family. [2Fe-2S] cluster serves as cofactor.

In terms of biological role, ferredoxins are iron-sulfur proteins that transfer electrons in a wide variety of metabolic reactions. The chain is Ferredoxin, heterocyst (fdxH) from Microchaete diplosiphon (Fremyella diplosiphon).